A 136-amino-acid polypeptide reads, in one-letter code: Acyl carrier protein 1, chloroplastic (136 aa).

Residues 1 to 52 (MASVTGTSISMASFKASLAPSRVSNLRSVSLPIKGKSFAPLRMRSARFVVCC) constitute a chloroplast transit peptide. Positions 56–131 (PETVEKVCAI…DAADLIEKLI (76 aa)) constitute a Carrier domain. Ser-91 is subject to O-(pantetheine 4'-phosphoryl)serine.

This sequence belongs to the acyl carrier protein (ACP) family. In terms of processing, 4'-phosphopantetheine is transferred from CoA to a specific serine of apo-ACP by acpS. This modification is essential for activity because fatty acids are bound in thioester linkage to the sulfhydryl of the prosthetic group.

Its subcellular location is the plastid. It is found in the chloroplast. It participates in lipid metabolism; fatty acid biosynthesis. Carrier of the growing fatty acid chain in fatty acid biosynthesis. This Casuarina glauca (Swamp oak) protein is Acyl carrier protein 1, chloroplastic (ACP1).